The chain runs to 592 residues: A-type ATP synthase subunit A (592 aa).

Residue 233–240 participates in ATP binding; it reads GPFGSGKT.

This sequence belongs to the ATPase alpha/beta chains family. As to quaternary structure, has multiple subunits with at least A(3), B(3), C, D, E, F, H, I and proteolipid K(x).

Its subcellular location is the cell membrane. It catalyses the reaction ATP + H2O + 4 H(+)(in) = ADP + phosphate + 5 H(+)(out). Functionally, component of the A-type ATP synthase that produces ATP from ADP in the presence of a proton gradient across the membrane. The A chain is the catalytic subunit. This Saccharolobus islandicus (strain M.16.27) (Sulfolobus islandicus) protein is A-type ATP synthase subunit A.